Here is a 224-residue protein sequence, read N- to C-terminus: Urease accessory protein UreG (224 aa).

Positions 1-20 (MATHSHPHSHTVPARPRRVR) are enriched in basic residues. Residues 1–25 (MATHSHPHSHTVPARPRRVRKPGEP) are disordered. Position 32-39 (32-39 (GPVGSGKT)) interacts with GTP.

This sequence belongs to the SIMIBI class G3E GTPase family. UreG subfamily. In terms of assembly, homodimer. UreD, UreF and UreG form a complex that acts as a GTP-hydrolysis-dependent molecular chaperone, activating the urease apoprotein by helping to assemble the nickel containing metallocenter of UreC. The UreE protein probably delivers the nickel.

The protein resides in the cytoplasm. Functionally, facilitates the functional incorporation of the urease nickel metallocenter. This process requires GTP hydrolysis, probably effectuated by UreG. This Mycobacterium bovis (strain ATCC BAA-935 / AF2122/97) protein is Urease accessory protein UreG.